A 344-amino-acid chain; its full sequence is N-acetyl-gamma-glutamyl-phosphate reductase (344 aa).

Residue Cys147 is part of the active site.

The protein belongs to the NAGSA dehydrogenase family. Type 1 subfamily.

It is found in the cytoplasm. The catalysed reaction is N-acetyl-L-glutamate 5-semialdehyde + phosphate + NADP(+) = N-acetyl-L-glutamyl 5-phosphate + NADPH + H(+). It participates in amino-acid biosynthesis; L-arginine biosynthesis; N(2)-acetyl-L-ornithine from L-glutamate: step 3/4. In terms of biological role, catalyzes the NADPH-dependent reduction of N-acetyl-5-glutamyl phosphate to yield N-acetyl-L-glutamate 5-semialdehyde. This is N-acetyl-gamma-glutamyl-phosphate reductase from Bacillus amyloliquefaciens (Bacillus velezensis).